The primary structure comprises 410 residues: Probable serine/threonine-protein kinase PBL8 (410 aa).

Residues 1–10 (MGNCGTRDEA) show a composition bias toward basic and acidic residues. A disordered region spans residues 1–45 (MGNCGTRDEAAVFTPQAQAQQLQKKHSRSVSDLSDPSTPRFRDDS). Glycine 2 carries N-myristoyl glycine lipidation. Residue cysteine 4 is the site of S-palmitoyl cysteine attachment. At threonine 58 the chain carries Phosphothreonine. A Protein kinase domain is found at 69-350 (FRPDYILGEG…DVVETLEPLQ (282 aa)). Residues 75–83 (LGEGGFGTV) and lysine 104 contribute to the ATP site. At tyrosine 149 the chain carries Phosphotyrosine. The active-site Proton acceptor is aspartate 199. Phosphoserine is present on residues serine 203 and serine 233. Phosphothreonine occurs at positions 234 and 239. Tyrosine 247 carries the post-translational modification Phosphotyrosine.

This sequence belongs to the protein kinase superfamily. Ser/Thr protein kinase family. Interacts with the Xanthomonas campestris effector XopAC/AvrAC.

It is found in the cell membrane. The catalysed reaction is L-seryl-[protein] + ATP = O-phospho-L-seryl-[protein] + ADP + H(+). It catalyses the reaction L-threonyl-[protein] + ATP = O-phospho-L-threonyl-[protein] + ADP + H(+). In terms of biological role, may be involved in plant defense signaling. This Arabidopsis thaliana (Mouse-ear cress) protein is Probable serine/threonine-protein kinase PBL8.